The chain runs to 373 residues: MSLNIHIKSGQDKWEVNVAPESTVLQFKEAINKANGIPVANQRLIYSGKILKDDQTVESYHIQDGHSVHLVKSQPKPQTASAAGANNATATGAAAGTGATPNMSSGQSAGFNPLADLTSARYAGYLNMPSADMFGPDGGALNNDSNNQDELLRMMENPIFQSQMNEMLSNPQMLDFMIQSNPQLQAMGPQARQMLQSPMFRQMLTNPDMIRQSMQFARMMDPNAGMGSAGGAASAFPAPGGDAPEEGSNTNTTSSSNTGNNAGTNAGTNAGANTAANPFASLLNPALNPFANAGNAASTGMPAFDPALLASMFQPPVQASQAEDTRPPEERYEHQLRQLNDMGFFDFDRNVAALRRSGGSVQGALDSLLNGDV.

The 76-residue stretch at 1 to 76 folds into the Ubiquitin-like domain; it reads MSLNIHIKSG…SVHLVKSQPK (76 aa). Residues K13 and K76 each participate in a glycyl lysine isopeptide (Lys-Gly) (interchain with G-Cter in ubiquitin) cross-link. Positions 221–270 are disordered; sequence DPNAGMGSAGGAASAFPAPGGDAPEEGSNTNTTSSSNTGNNAGTNAGTNA. The segment covering 231 to 270 has biased composition (low complexity); the sequence is GAASAFPAPGGDAPEEGSNTNTTSSSNTGNNAGTNAGTNA. The region spanning 327–371 is the UBA domain; that stretch reads PPEERYEHQLRQLNDMGFFDFDRNVAALRRSGGSVQGALDSLLNG.

Its subcellular location is the nucleus. Involved, with RAD23 in spindle pole body duplication. Involved in the ubiquitin-proteasome proteolytic pathway. This chain is Ubiquitin domain-containing protein DSK2 (DSK2), found in Saccharomyces cerevisiae (strain ATCC 204508 / S288c) (Baker's yeast).